We begin with the raw amino-acid sequence, 137 residues long: uncharacterized protein (137 aa).

Helical transmembrane passes span 5 to 25, 79 to 99, and 109 to 129; these read ELLWPALITALATMLYLVLVI, IAAILGAVWLLGRILYAWGYY, and FALGSLSSMILVVGALLSILW.

The protein belongs to the MAPEG family.

The protein resides in the cell membrane. This is an uncharacterized protein from Synechocystis sp. (strain ATCC 27184 / PCC 6803 / Kazusa).